Consider the following 433-residue polypeptide: DNA polymerase processivity factor (433 aa).

A disordered region spans residues 274-433 (RGDPFDKNYV…VPNTKKQKCG (160 aa)). Residues 298-307 (SLSSLANAGG) show a composition bias toward low complexity. 2 stretches are compositionally biased toward gly residues: residues 325–336 (GLGGLGGGGGGG) and 344–359 (GGGGSGTRKMSSGGGG). The span at 360-376 (GDHDHGLSSKEKYEQHK) shows a compositional bias: basic and acidic residues. The segment covering 385–398 (GGSGGGGGGGGGGL) has biased composition (gly residues).

It belongs to the herpesviridae polymerase accessory protein family. As to quaternary structure, forms homodimers. Interacts with host SMARCB1. Interacts with host NCL/nucleolin; this interaction is important for the organization of proteins within viral replication compartments. Interacts with UL112/UL113; this interaction is necessary for efficient viral DNA replication. Interacts with UL84. Interacts with the uracil DNA glycosylase UL114. Interacts with the DNA polymerase catalytic subunit UL54. Interacts with host IRF3. Interacts with host RELA. Post-translationally, phosphorylated by UL97 on serine residues, phosphorylation seems important for UL44 nuclear entry but does not directly affect its role in replication. In terms of processing, sumoylated. Sumoylation on Lys-410 increases viral DNA replication.

It is found in the virion. It localises to the host nucleus. Accessory subunit of the DNA polymerase that plays an essential role in viral DNA replication and acts by increasing the processivity of polymerization. Forms dimers that binds to double-stranded DNA and UL54 specifically to stimulates long chain DNA synthesis efficiently. Plays an important role in maintaining the structure of viral replication compartments by interacting with host nucleolin/NUC. In addition, suppresses innate immune responses through effects on host IRF3 and NF-kappa-B. Mechanistically, interfere with the binding of IRF3 and the p65 NF-kappa-B subunit to the promoters of antiviral genes, thereby inhibiting the expression of these genes. This Human cytomegalovirus (strain Merlin) (HHV-5) protein is DNA polymerase processivity factor (UL44).